The following is a 448-amino-acid chain: MTVITRFAPSPTGKLHIGNVRVALVNWLYAQKYNGNFILRIDDTDRDRSKVEYHEAIIKDLQWLGINWNSSFLQSTRFNKYAAAKQYLISSGRLYECYETPEMLEIERKRQLASGYPPIYSRKSLELTTAQKVQLQAEGYKVHYRFLIDRNKPIIWNDLIKGEIKYDGSNVSDPIVIKEDGTMIYMLCSVIDDIEYRISHIIRGEDHITNTAIQIQMFEALGAAIPQLGHLSLIKSDSGKISKRIGGFTIDYLKDQLGIEPMAVNNLLALSGTSNNVDAYFSLESLITKFDLSAFSKSTIIYNENELVTLNHKLLVNTEYDTIKHRLTAIGLPDVTKEFWLAVRHNLNTLNDIKIWWQICYLPTLDKFQEQDAEFLKLAAELLPSGKLTDNSWDDWVQNIIKATNRRGKALFMPLRLALTGITYGPELKYLLPLIGGDEVRARLLRYQ.

A 'HIGH' region motif is present at residues Pro9–Asn19. Positions Lys240–Arg244 match the 'KMSKS' region motif. Residue Lys243 participates in ATP binding.

Belongs to the class-I aminoacyl-tRNA synthetase family. Glutamate--tRNA ligase type 1 subfamily. As to quaternary structure, monomer.

Its subcellular location is the cytoplasm. It catalyses the reaction tRNA(Glu) + L-glutamate + ATP = L-glutamyl-tRNA(Glu) + AMP + diphosphate. In terms of biological role, catalyzes the attachment of glutamate to tRNA(Glu) in a two-step reaction: glutamate is first activated by ATP to form Glu-AMP and then transferred to the acceptor end of tRNA(Glu). This Orientia tsutsugamushi (strain Ikeda) (Rickettsia tsutsugamushi) protein is Glutamate--tRNA ligase 1.